We begin with the raw amino-acid sequence, 503 residues long: AMP phosphorylase (503 aa).

AMP-binding positions include G168, 194–199 (SRAITS), and T203. D256 functions as the Proton donor in the catalytic mechanism. Residues S264 and K288 each contribute to the AMP site.

It belongs to the thymidine/pyrimidine-nucleoside phosphorylase family. Type 2 subfamily.

The catalysed reaction is AMP + phosphate = alpha-D-ribose 1,5-bisphosphate + adenine. It carries out the reaction CMP + phosphate = cytosine + alpha-D-ribose 1,5-bisphosphate. The enzyme catalyses UMP + phosphate = alpha-D-ribose 1,5-bisphosphate + uracil. Its function is as follows. Catalyzes the conversion of AMP and phosphate to adenine and ribose 1,5-bisphosphate (R15P). Exhibits phosphorylase activity toward CMP and UMP in addition to AMP. Functions in an archaeal AMP degradation pathway, together with R15P isomerase and RubisCO. In Pyrococcus furiosus (strain ATCC 43587 / DSM 3638 / JCM 8422 / Vc1), this protein is AMP phosphorylase.